We begin with the raw amino-acid sequence, 221 residues long: Sugar transporter SWEET1 (221 aa).

7 consecutive transmembrane segments (helical) span residues 3-23 (AGGF…LGMF), 42-62 (VQFL…SYGA), 68-88 (ILIV…LAYL), 96-116 (VVLL…GYFW), 126-146 (LQLL…SPLA), 160-180 (LSYP…LYGF), and 186-206 (YIMV…WLFW). The MtN3/slv 1 domain maps to 10–94 (LIYGACVVFT…LAYLHYCPRK (85 aa)). A MtN3/slv 2 domain is found at 127–212 (QLLGLFCSVF…WLFWKYPQEQ (86 aa)). A mediates interaction with TRPV2 region spans residues 149-221 (AKVIQTKSTQ…QDRNYWFLQT (73 aa)).

It belongs to the SWEET sugar transporter family. Interacts with TRPV2; the interaction probably occurs intracellularly and depends on TRPV2 N-glycosylation.

It localises to the golgi apparatus membrane. Its subcellular location is the cell membrane. Mediates sugar transport across membranes. May stimulate V(D)J recombination by the activation of RAG1. The protein is Sugar transporter SWEET1 (SLC50A1) of Papio anubis (Olive baboon).